Reading from the N-terminus, the 545-residue chain is Myotubularin-related protein 9 (545 aa).

Methionine 1 carries the post-translational modification N-acetylmethionine. The region spanning 4–99 (AELIKTPRVD…LNIASSIEAL (96 aa)) is the GRAM domain. Residues 123–498 (GWHSFLPEQE…QSLQLWEGIF (376 aa)) form the Myotubularin phosphatase domain. A coiled-coil region spans residues 508 to 542 (LDEAYEEMVNIIEYNKELQAKVNVLRRQLAELETE).

Belongs to the protein-tyrosine phosphatase family. Non-receptor class myotubularin subfamily. In terms of assembly, homodimer. Heterodimer (via C-terminus) with lipid phosphatase MTMR6 (via C-terminus). Heterodimer (via coiled coil domain) with lipid phosphatase MTMR7 (via C-terminus).

The protein localises to the cytoplasm. The protein resides in the cell projection. It localises to the ruffle membrane. Its subcellular location is the perinuclear region. It is found in the endoplasmic reticulum. In terms of biological role, acts as an adapter for myotubularin-related phosphatases. Increases lipid phosphatase MTMR6 catalytic activity, specifically towards phosphatidylinositol 3,5-bisphosphate, and MTMR6 binding affinity for phosphorylated phosphatidylinositols. Positively regulates lipid phosphatase MTMR7 catalytic activity. The formation of the MTMR6-MTMR9 complex, stabilizes both MTMR6 and MTMR9 protein levels. Plays a role in the late stages of macropinocytosis possibly by regulating MTMR6-mediated dephosphorylation of phosphatidylinositol 3-phosphate in membrane ruffles. Negatively regulates DNA damage-induced apoptosis, in part via its association with MTMR6. Does not bind mono-, di- and tri-phosphorylated phosphatidylinositols, phosphatidic acid and phosphatidylserine. The chain is Myotubularin-related protein 9 (Mtmr9) from Mus musculus (Mouse).